A 655-amino-acid polypeptide reads, in one-letter code: Alpha-amylase (655 aa).

E123 serves as the catalytic Nucleophile. Catalysis depends on D214, which acts as the Proton donor.

This sequence belongs to the glycosyl hydrolase 57 family.

The catalysed reaction is Endohydrolysis of (1-&gt;4)-alpha-D-glucosidic linkages in polysaccharides containing three or more (1-&gt;4)-alpha-linked D-glucose units.. The sequence is that of Alpha-amylase (amyA) from Pyrococcus abyssi (strain GE5 / Orsay).